A 573-amino-acid polypeptide reads, in one-letter code: Delta 8-(E)-sphingolipid desaturase (573 aa).

Residues 2–77 (SRVLSRRDIA…FKIWKIGRID (76 aa)) form the Cytochrome b5 heme-binding domain. His37 and His60 together coordinate heme. A helical transmembrane segment spans residues 228 to 248 (LFGISFYLLSLKWFAISAICL). Residues 260–264 (HDAGH) carry the Histidine box-1 motif. A helical membrane pass occupies residues 273-293 (VDNIIGMTVASWIGGLSLGWW). The short motif at 297–301 (HDVHH) is the Histidine box-2 element. 3 consecutive transmembrane segments (helical) span residues 353-372 (YLYY…LSWM), 393-413 (LAEL…KQMP), and 422-442 (VMIS…SHFA). A Histidine box-3 motif is present at residues 481–485 (QVIHH).

Belongs to the fatty acid desaturase type 1 family.

Its subcellular location is the membrane. The catalysed reaction is an N-acylsphing-4-enine + 2 Fe(II)-[cytochrome b5] + O2 + 2 H(+) = a (4E,8E)-4-sphinga-4,8-dienine ceramide + 2 Fe(III)-[cytochrome b5] + 2 H2O. It participates in lipid metabolism; sphingolipid metabolism. Delta(8)-fatty-acid desaturase which introduces a double bond at the 8-position in the long-chain base (LCB) of ceramides. Required for the formation of the di-unsaturated sphingoid base (E,E)-sphinga-4,8-dienine during glucosylceramide (GluCer) biosynthesis. The chain is Delta 8-(E)-sphingolipid desaturase from Kluyveromyces lactis (Yeast).